The chain runs to 481 residues: Small ribosomal subunit protein bS1 (481 aa).

S1 motif domains follow at residues 36–105, 123–188, 209–277, and 294–363; these read GDIV…LSKK, DEAV…LSRR, GTIR…LSLK, and GQIV…LSLK. The disordered stretch occupies residues 429-467; sequence TAQMEKFAAAEAAGRGADDQSSASSAPSEKTAGGSLASD. Positions 437-456 are enriched in low complexity; it reads AAEAAGRGADDQSSASSAPS.

It belongs to the bacterial ribosomal protein bS1 family.

In terms of biological role, binds mRNA; thus facilitating recognition of the initiation point. It is needed to translate mRNA with a short Shine-Dalgarno (SD) purine-rich sequence. The polypeptide is Small ribosomal subunit protein bS1 (rpsA) (Mycobacterium tuberculosis (strain CDC 1551 / Oshkosh)).